A 135-amino-acid polypeptide reads, in one-letter code: Galectin-1 (135 aa).

An N-acetylalanine modification is found at Ala-2. The 132-residue stretch at 4–135 folds into the Galectin domain; the sequence is GLVASNLNLK…DFKIKCVAFD (132 aa). Residues Lys-13 and Lys-29 each carry the N6-acetyllysine modification. Residue Ser-30 is modified to Phosphoserine. Residues 45-49, His-53, Asn-62, and 69-72 contribute to the a beta-D-galactoside site; these read HFNPR and WGTE. Residue Lys-108 is modified to N6-acetyllysine; alternate. Lys-108 bears the N6-succinyllysine; alternate mark. An N6-acetyllysine modification is found at Lys-128.

Homodimer. Binds LGALS3BP. Interacts with CD2, CD3, CD4, CD6, CD7, CD43, ALCAM and CD45. Interacts with laminin (via poly-N-acetyllactosamine). Interacts with SUSD2.

The protein localises to the secreted. Its subcellular location is the extracellular space. The protein resides in the extracellular matrix. In terms of biological role, lectin that binds beta-galactoside and a wide array of complex carbohydrates. Plays a role in regulating apoptosis, cell proliferation and cell differentiation. Inhibits CD45 protein phosphatase activity and therefore the dephosphorylation of Lyn kinase. Strong inducer of T-cell apoptosis. This Pongo abelii (Sumatran orangutan) protein is Galectin-1 (LGALS1).